We begin with the raw amino-acid sequence, 468 residues long: Bone morphogenetic protein 3 (468 aa).

The first 22 residues, 1 to 22, serve as a signal peptide directing secretion; sequence MAGARGLLCLWLGYFCLNLAQG. The propeptide occupies 23-358; the sequence is QRPNLHLPGL…EQTLKKARRK (336 aa). The interval 29 to 53 is disordered; sequence LPGLRETEPSDRATGGSPSPDLRPH. Residues Asn-115, Asn-139, Asn-171, and Asn-216 are each glycosylated (N-linked (GlcNAc...) asparagine). The tract at residues 314–349 is disordered; the sequence is RKPYKSLQTQPPEKSRNKKKQRKGSHQKGQTLQFDE. The span at 329–339 shows a compositional bias: basic residues; the sequence is RNKKKQRKGSH. Residues 340 to 349 show a composition bias toward polar residues; sequence QKGQTLQFDE. Intrachain disulfides connect Cys-366–Cys-433, Cys-395–Cys-465, and Cys-399–Cys-467. Asn-459 is a glycosylation site (N-linked (GlcNAc...) asparagine).

Belongs to the TGF-beta family. As to quaternary structure, homodimer; disulfide-linked.

It is found in the secreted. Functionally, negatively regulates bone density. Antagonizes the ability of certain osteogenic BMPs to induce osteoprogenitor differentiation and ossification. This Mus musculus (Mouse) protein is Bone morphogenetic protein 3 (Bmp3).